The following is a 76-amino-acid chain: Large ribosomal subunit protein eL20 (76 aa).

Belongs to the eukaryotic ribosomal protein eL20 family. Part of the 50S ribosomal subunit. Binds 23S rRNA.

This chain is Large ribosomal subunit protein eL20, found in Methanococcus vannielii (strain ATCC 35089 / DSM 1224 / JCM 13029 / OCM 148 / SB).